We begin with the raw amino-acid sequence, 343 residues long: DNA-directed RNA polymerase subunit alpha (343 aa).

Residues 1–243 form an alpha N-terminal domain (alpha-NTD) region; sequence MTQEIDEKIP…EQLDIFINFD (243 aa). Positions 261-343 are alpha C-terminal domain (alpha-CTD); that stretch reads ENPYLDKPVE…NAPSDAETEE (83 aa).

Belongs to the RNA polymerase alpha chain family. As to quaternary structure, homodimer. The RNAP catalytic core consists of 2 alpha, 1 beta, 1 beta' and 1 omega subunit. When a sigma factor is associated with the core the holoenzyme is formed, which can initiate transcription.

It carries out the reaction RNA(n) + a ribonucleoside 5'-triphosphate = RNA(n+1) + diphosphate. DNA-dependent RNA polymerase catalyzes the transcription of DNA into RNA using the four ribonucleoside triphosphates as substrates. The protein is DNA-directed RNA polymerase subunit alpha of Desulfotalea psychrophila (strain LSv54 / DSM 12343).